Here is a 140-residue protein sequence, read N- to C-terminus: Large ribosomal subunit protein uL14 (140 aa).

It belongs to the universal ribosomal protein uL14 family.

The sequence is that of Large ribosomal subunit protein uL14 (rpl-23) from Caenorhabditis elegans.